The sequence spans 454 residues: UPF0210 protein Mlab_1030 (454 aa).

This sequence belongs to the UPF0210 family.

The polypeptide is UPF0210 protein Mlab_1030 (Methanocorpusculum labreanum (strain ATCC 43576 / DSM 4855 / Z)).